A 265-amino-acid polypeptide reads, in one-letter code: RING finger protein 208 (265 aa).

The interval 83 to 106 (MPTLEGASHTPPLPRRPRKGSSEL) is disordered. At Ser103 the chain carries Phosphoserine. The RING-type zinc finger occupies 147-194 (CPTCGHTYNVTQRRPRVLSCLHSVCEQCLQILYESCPKYKFISCPTCH).

In Mus musculus (Mouse), this protein is RING finger protein 208 (Rnf208).